The primary structure comprises 130 residues: Large-conductance mechanosensitive channel (130 aa).

At 1–14 (MWNEFKAFAMRGNI) the chain is on the cytoplasmic side. A helical transmembrane segment spans residues 15–43 (VDLAIGVVIGGAFGKIVTSLVNDIIMPLV). Residues 44-65 (GLLLGGLDFSGLSFTFGDAVVK) are Extracellular-facing. Residues 66 to 85 (YGSFIQTIVNFLIISFSIFI) form a helical membrane-spanning segment. Residues 86 to 130 (VIRTLNGLRRKKEAEEEAAEEAVDAQEELLKEIRDLLKQQAKSPE) are Cytoplasmic-facing.

Belongs to the MscL family. As to quaternary structure, homopentamer.

It is found in the cell membrane. Its function is as follows. Channel that opens in response to stretch forces in the membrane lipid bilayer. Forms a nonselective ion channel with a conductance of about 4 nanosiemens. May participate in the regulation of osmotic pressure changes within the cell. The sequence is that of Large-conductance mechanosensitive channel from Bacillus subtilis (strain 168).